Consider the following 143-residue polypeptide: MAKKVAGQLKLQVKAGSANPSPPIGPALGQRGINIMEFCKAFNAATQEMEKGMPIPVVITYYQDKSFTFAMKQPPVSYWLKKEAKITSGSKTPGKGAKAGTLTKAQIKTIAEAKMKDLNAADIEGAMAMIEGSARAMGLEVVG.

Belongs to the universal ribosomal protein uL11 family. Part of the ribosomal stalk of the 50S ribosomal subunit. Interacts with L10 and the large rRNA to form the base of the stalk. L10 forms an elongated spine to which L12 dimers bind in a sequential fashion forming a multimeric L10(L12)X complex. Post-translationally, one or more lysine residues are methylated.

In terms of biological role, forms part of the ribosomal stalk which helps the ribosome interact with GTP-bound translation factors. The polypeptide is Large ribosomal subunit protein uL11 (Rhizobium etli (strain ATCC 51251 / DSM 11541 / JCM 21823 / NBRC 15573 / CFN 42)).